A 328-amino-acid chain; its full sequence is Tetraacyldisaccharide 4'-kinase (328 aa).

Position 55–62 (Thr55–Thr62) interacts with ATP.

It belongs to the LpxK family.

The enzyme catalyses a lipid A disaccharide + ATP = a lipid IVA + ADP + H(+). The protein operates within glycolipid biosynthesis; lipid IV(A) biosynthesis; lipid IV(A) from (3R)-3-hydroxytetradecanoyl-[acyl-carrier-protein] and UDP-N-acetyl-alpha-D-glucosamine: step 6/6. In terms of biological role, transfers the gamma-phosphate of ATP to the 4'-position of a tetraacyldisaccharide 1-phosphate intermediate (termed DS-1-P) to form tetraacyldisaccharide 1,4'-bis-phosphate (lipid IVA). This Hamiltonella defensa subsp. Acyrthosiphon pisum (strain 5AT) protein is Tetraacyldisaccharide 4'-kinase.